Consider the following 21-residue polypeptide: Hemocyanin subunit 4 (21 aa).

Belongs to the tyrosinase family. Hemocyanin subfamily. In terms of tissue distribution, hemolymph.

Its subcellular location is the secreted. The protein localises to the extracellular space. Functionally, hemocyanins are copper-containing oxygen carriers occurring freely dissolved in the hemolymph of many mollusks and arthropods. The chain is Hemocyanin subunit 4 from Maja squinado (Mediterranean spider crab).